A 317-amino-acid polypeptide reads, in one-letter code: uncharacterized protein (317 aa).

Over 1–13 (MKRVTGVFLTLLR) the chain is Cytoplasmic. The chain crosses the membrane as a helical span at residues 14–34 (FSQFASSVLVMSLLAYAIHAY). Residues 35–49 (GNRGNKKTNFTLATG) are Extracellular-facing. Asn-43 is a glycosylation site (N-linked (GlcNAc...) asparagine). A helical transmembrane segment spans residues 50 to 70 (VISVFYLIALGILCLALPTLI). Position 71 (Tyr-71) is a topological domain, cytoplasmic. A helical membrane pass occupies residues 72-92 (IGMYFCAELIVCMLWLAAFVV). The Extracellular segment spans residues 93-133 (LAKAQGERSCSNTNADGLYYNPYSGQYTADSHRRACNSSQA). Asn-129 carries an N-linked (GlcNAc...) asparagine glycan. A helical transmembrane segment spans residues 134–154 (AIAFSGLCFVLFLISVILLGI). The Cytoplasmic segment spans residues 155 to 317 (NVLTPIRKRY…EPNRNVNQMP (163 aa)). Residues 204 to 317 (RTGDVEAGAG…EPNRNVNQMP (114 aa)) are disordered. Positions 239-250 (TTTTNTRYTTTT) are enriched in low complexity. Polar residues predominate over residues 256-282 (RYTTNDRNPGSANVANSAVDQHAYSTD). Residues 284–295 (SGDRSYQEKVTE) show a composition bias toward basic and acidic residues. Residues 302–317 (MSGSTAEPNRNVNQMP) show a composition bias toward polar residues.

The protein localises to the membrane. This is an uncharacterized protein from Saccharomyces cerevisiae (strain ATCC 204508 / S288c) (Baker's yeast).